Here is a 171-residue protein sequence, read N- to C-terminus: Shikimate kinase (171 aa).

14-19 lines the ATP pocket; it reads GAGKST. Mg(2+) is bound at residue Ser-18. Asp-36, Arg-60, and Gly-82 together coordinate substrate. Arg-120 contacts ATP. Arg-139 lines the substrate pocket. An ATP-binding site is contributed by Gln-156.

Belongs to the shikimate kinase family. Monomer. The cofactor is Mg(2+).

The protein localises to the cytoplasm. It carries out the reaction shikimate + ATP = 3-phosphoshikimate + ADP + H(+). It functions in the pathway metabolic intermediate biosynthesis; chorismate biosynthesis; chorismate from D-erythrose 4-phosphate and phosphoenolpyruvate: step 5/7. In terms of biological role, catalyzes the specific phosphorylation of the 3-hydroxyl group of shikimic acid using ATP as a cosubstrate. This chain is Shikimate kinase, found in Shewanella frigidimarina (strain NCIMB 400).